Reading from the N-terminus, the 998-residue chain is Bifunctional glutamine synthetase adenylyltransferase/adenylyl-removing enzyme (998 aa).

The adenylyl removase stretch occupies residues 1-487 (MVVTKPATQR…LHAKLFYQPL (487 aa)). Residues 492–998 (GPAGLEIRHG…KAVVCKVFGS (507 aa)) are adenylyl transferase.

The protein belongs to the GlnE family. Requires Mg(2+) as cofactor.

The enzyme catalyses [glutamine synthetase]-O(4)-(5'-adenylyl)-L-tyrosine + phosphate = [glutamine synthetase]-L-tyrosine + ADP. The catalysed reaction is [glutamine synthetase]-L-tyrosine + ATP = [glutamine synthetase]-O(4)-(5'-adenylyl)-L-tyrosine + diphosphate. Functionally, involved in the regulation of glutamine synthetase GlnA, a key enzyme in the process to assimilate ammonia. When cellular nitrogen levels are high, the C-terminal adenylyl transferase (AT) inactivates GlnA by covalent transfer of an adenylyl group from ATP to specific tyrosine residue of GlnA, thus reducing its activity. Conversely, when nitrogen levels are low, the N-terminal adenylyl removase (AR) activates GlnA by removing the adenylyl group by phosphorolysis, increasing its activity. The regulatory region of GlnE binds the signal transduction protein PII (GlnB) which indicates the nitrogen status of the cell. The protein is Bifunctional glutamine synthetase adenylyltransferase/adenylyl-removing enzyme of Mycolicibacterium paratuberculosis (strain ATCC BAA-968 / K-10) (Mycobacterium paratuberculosis).